A 331-amino-acid polypeptide reads, in one-letter code: Phenylalanine--tRNA ligase alpha subunit (331 aa).

A Mg(2+)-binding site is contributed by E258.

It belongs to the class-II aminoacyl-tRNA synthetase family. Phe-tRNA synthetase alpha subunit type 1 subfamily. As to quaternary structure, tetramer of two alpha and two beta subunits. Requires Mg(2+) as cofactor.

The protein localises to the cytoplasm. It carries out the reaction tRNA(Phe) + L-phenylalanine + ATP = L-phenylalanyl-tRNA(Phe) + AMP + diphosphate + H(+). This is Phenylalanine--tRNA ligase alpha subunit (pheS) from Synechocystis sp. (strain ATCC 27184 / PCC 6803 / Kazusa).